We begin with the raw amino-acid sequence, 181 residues long: ATP-dependent protease subunit HslV (181 aa).

Residue T7 is part of the active site. Na(+) contacts are provided by A165, C168, and T171.

The protein belongs to the peptidase T1B family. HslV subfamily. In terms of assembly, a double ring-shaped homohexamer of HslV is capped on each side by a ring-shaped HslU homohexamer. The assembly of the HslU/HslV complex is dependent on binding of ATP.

It localises to the cytoplasm. It catalyses the reaction ATP-dependent cleavage of peptide bonds with broad specificity.. With respect to regulation, allosterically activated by HslU binding. Protease subunit of a proteasome-like degradation complex believed to be a general protein degrading machinery. The protein is ATP-dependent protease subunit HslV of Lysinibacillus sphaericus (strain C3-41).